The chain runs to 582 residues: Hemagglutinin-neuraminidase (582 aa).

The helical transmembrane segment at I35–L55 threads the bilayer. Intrachain disulfides connect C178–C202, C192–C253, and C244–C257. 2 N-linked (GlcNAc...) asparagine; by host glycosylation sites follow: N284 and N329. Intrachain disulfides connect C350–C471, C382–C392, and C465–C475. N-linked (GlcNAc...) asparagine; by host glycosylation is found at N400 and N448. Residue N507 is glycosylated (N-linked (GlcNAc...) asparagine; by host). C545 and C556 form a disulfide bridge.

This sequence belongs to the paramyxoviruses hemagglutinin-neuraminidase family. As to quaternary structure, homodimer. Further forms homotetramer (dimer of dimers). Interacts with F protein trimer.

The protein resides in the virion membrane. Its subcellular location is the host cell membrane. The enzyme catalyses Hydrolysis of alpha-(2-&gt;3)-, alpha-(2-&gt;6)-, alpha-(2-&gt;8)- glycosidic linkages of terminal sialic acid residues in oligosaccharides, glycoproteins, glycolipids, colominic acid and synthetic substrates.. Attaches the virus to alpha-2,3-linked sialic acid-containing cell receptors and thereby initiating infection. Binding of HN protein to the receptor induces a conformational change that allows the F protein to trigger virion/cell membranes fusion. Binds to the glycan motifs sialyl Lewis (SLe) and GM2 ganglioside (GM2-glycan). In terms of biological role, neuraminidase activity ensures the efficient spread of the virus by dissociating the mature virions from the neuraminic acid containing glycoproteins. This chain is Hemagglutinin-neuraminidase (HN), found in Homo sapiens (Human).